The sequence spans 1050 residues: Mitotic checkpoint serine/threonine-protein kinase BUB1 beta (1050 aa).

The BUB1 N-terminal domain maps to 62-226 (FEYEIRFYTG…FESSVPQRST (165 aa)). Positions 111–118 (GEKRYYSD) match the Nuclear localization signal motif. A necessary for interaction with KNL1 region spans residues 152–185 (AQFYISWAEEYEARENFRKADAIFQEGIQQKAEP). Positions 224 to 232 (RSTLAELKS) match the D-box motif. Lysine 250 bears the N6-acetyllysine; by PCAF mark. At serine 367 the chain carries Phosphoserine. Residues 368–393 (TRKPGKEEGDPLQRVQSHQQASEEKK) are disordered. Residue serine 435 is modified to Phosphoserine. A disordered region spans residues 456-480 (IQTTQQERTGDQQEETMPTKETTKL). 3 positions are modified to phosphoserine: serine 543, serine 665, and serine 670. At serine 676 the chain carries Phosphoserine; by PLK1. The residue at position 697 (serine 697) is a Phosphoserine. The Protein kinase domain occupies 766–1050 (YCIKREYLIC…LTSPGALLFQ (285 aa)). Residue 772-780 (YLICEDYKL) coordinates ATP. Threonine 792 carries the phosphothreonine; by PLK1 modification. ATP is bound at residue lysine 795. Catalysis depends on aspartate 882, which acts as the Proton acceptor. Threonine 1008 is subject to Phosphothreonine; by PLK1. Threonine 1042 carries the post-translational modification Phosphothreonine. A Phosphoserine modification is found at serine 1043.

This sequence belongs to the protein kinase superfamily. Ser/Thr protein kinase family. BUB1 subfamily. In terms of assembly, interacts with CENPE. Interacts with PLK1. Part of a complex containing BUB3, CDC20 and BUB1B. Interacts with anaphase-promoting complex/cyclosome (APC/C). Interacts with KNL1. Interacts with KAT2B. Interacts with RIPK3. Interacts with the closed conformation form of MAD2L1. Proteolytically cleaved by caspase-3 in a cell cycle specific manner. The cleavage might be involved in the durability of the cell cycle delay. Caspase-3 cleavage is associated with abrogation of the mitotic checkpoint. The major site of cleavage is at Asp-610. In terms of processing, acetylation at Lys-250 regulates its degradation and timing in anaphase entry. Post-translationally, ubiquitinated. Degraded by the proteasome. Ubiquitinated by UBR5, promoting disassembly of the mitotic checkpoint complex from the APC/C complex. Sumoylated with SUMO2 and SUMO3. The sumoylation mediates the association with CENPE at the kinetochore. In terms of processing, autophosphorylated in vitro. Intramolecular autophosphorylation is stimulated by CENPE. Phosphorylated during mitosis and hyperphosphorylated in mitotically arrested cells. Phosphorylation at Ser-670 and Ser-1043 occurs at kinetochores upon mitotic entry with dephosphorylation at the onset of anaphase. In terms of tissue distribution, highly expressed in thymus followed by spleen. Preferentially expressed in tissues with a high mitotic index.

It localises to the cytoplasm. The protein resides in the nucleus. It is found in the chromosome. The protein localises to the centromere. Its subcellular location is the kinetochore. It localises to the cytoskeleton. The protein resides in the microtubule organizing center. It is found in the centrosome. It catalyses the reaction L-seryl-[protein] + ATP = O-phospho-L-seryl-[protein] + ADP + H(+). It carries out the reaction L-threonyl-[protein] + ATP = O-phospho-L-threonyl-[protein] + ADP + H(+). With respect to regulation, kinase activity stimulated by CENPE. Functionally, essential component of the mitotic checkpoint. Required for normal mitosis progression. The mitotic checkpoint delays anaphase until all chromosomes are properly attached to the mitotic spindle. One of its checkpoint functions is to inhibit the activity of the anaphase-promoting complex/cyclosome (APC/C) by blocking the binding of CDC20 to APC/C, independently of its kinase activity. The other is to monitor kinetochore activities that depend on the kinetochore motor CENPE. Required for kinetochore localization of CENPE. Negatively regulates PLK1 activity in interphase cells and suppresses centrosome amplification. Also implicated in triggering apoptosis in polyploid cells that exit aberrantly from mitotic arrest. May play a role for tumor suppression. This Homo sapiens (Human) protein is Mitotic checkpoint serine/threonine-protein kinase BUB1 beta (BUB1B).